Reading from the N-terminus, the 572-residue chain is Proline--tRNA ligase (572 aa).

The protein belongs to the class-II aminoacyl-tRNA synthetase family. ProS type 1 subfamily. In terms of assembly, homodimer.

The protein resides in the cytoplasm. It catalyses the reaction tRNA(Pro) + L-proline + ATP = L-prolyl-tRNA(Pro) + AMP + diphosphate. In terms of biological role, catalyzes the attachment of proline to tRNA(Pro) in a two-step reaction: proline is first activated by ATP to form Pro-AMP and then transferred to the acceptor end of tRNA(Pro). As ProRS can inadvertently accommodate and process non-cognate amino acids such as alanine and cysteine, to avoid such errors it has two additional distinct editing activities against alanine. One activity is designated as 'pretransfer' editing and involves the tRNA(Pro)-independent hydrolysis of activated Ala-AMP. The other activity is designated 'posttransfer' editing and involves deacylation of mischarged Ala-tRNA(Pro). The misacylated Cys-tRNA(Pro) is not edited by ProRS. In Yersinia pseudotuberculosis serotype O:1b (strain IP 31758), this protein is Proline--tRNA ligase.